We begin with the raw amino-acid sequence, 413 residues long: MKRVNSCVKDEEHVLEELETEGERQLKSLLQHQLDTSVSIEECVSKKKSFAPGTMYKPFGKEAAGTMTLSQFQTLHEKDQETASLRELGLNETEILIWKSHVSGEKRTKLRATPEAIQKRLEDIKERISERQRILCLPQRFSKSKQLTRREMEIEKSLFQGTDRHSFLKALYYQDEPPKKNKGDPMNNLEHFYRETIMKKRLEEFQLLRGESFACHSLVSAASVSGSGTAEKPSLLQDKGKQAAQGKGPRLHVAKLIDFPTEQYWTGPKTLKQPIEFIPEDEIQRNRLSEEEIRNIPMFSSYNPGEPNKVLYLKNLSPRVKERDLISLFARFQEKKGPPIQFRMMTGRMRGQAFLTFPNKDIAWQALHQINGYKLYGKILVIEFAKSKKQQSAVQRSSLITSAPDGRTEINGS.

The segment at Ser225–Lys247 is disordered. In terms of domain architecture, RRM spans Lys309 to Ser387.

In terms of biological role, may bind RNA. The polypeptide is RNA-binding protein 41 (Rbm41) (Mus musculus (Mouse)).